A 144-amino-acid polypeptide reads, in one-letter code: Transcriptional regulator SlyA (144 aa).

The HTH marR-type domain maps to 2–135 (ESTLGSDLAR…LVGLIGKLEQ (134 aa)). Positions 49–72 (QIQLAKAIGIEQPSLVRTLDQLEE) form a DNA-binding region, H-T-H motif.

This sequence belongs to the SlyA family. As to quaternary structure, homodimer.

Functionally, transcription regulator that can specifically activate or repress expression of target genes. The chain is Transcriptional regulator SlyA from Serratia proteamaculans (strain 568).